A 738-amino-acid polypeptide reads, in one-letter code: Translation initiation factor IF-2 (738 aa).

A compositionally biased stretch (polar residues) spans 1–10 (MNSMRISGHQ). The segment at 1 to 150 (MNSMRISGHQ…PTTVRAPVRP (150 aa)) is disordered. A compositionally biased stretch (gly residues) spans 22-102 (AGGGRGPGNP…GGRGPSGGRG (81 aa)). Residues 103–120 (GDGRRREESPTDHEDGRI) show a composition bias toward basic and acidic residues. Positions 121–143 (NRSGRSTSTTTTRTSSTLARPTT) are enriched in low complexity. Residues 238–405 (PRPPVVTIMG…MILLVADLNE (168 aa)) form the tr-type G domain. Residues 247-254 (GHVDHGKT) form a G1 region. Position 247–254 (247–254 (GHVDHGKT)) interacts with GTP. The segment at 272-276 (GITQH) is G2. Residues 293–296 (DTPG) form a G3 region. Residues 293-297 (DTPGH) and 347-350 (NKID) each bind GTP. The G4 stretch occupies residues 347–350 (NKID). The tract at residues 383–385 (SAK) is G5.

Belongs to the TRAFAC class translation factor GTPase superfamily. Classic translation factor GTPase family. IF-2 subfamily.

The protein resides in the cytoplasm. Functionally, one of the essential components for the initiation of protein synthesis. Protects formylmethionyl-tRNA from spontaneous hydrolysis and promotes its binding to the 30S ribosomal subunits. Also involved in the hydrolysis of GTP during the formation of the 70S ribosomal complex. This is Translation initiation factor IF-2 from Roseiflexus castenholzii (strain DSM 13941 / HLO8).